A 300-amino-acid polypeptide reads, in one-letter code: Acetaldehyde dehydrogenase 3 (300 aa).

Residue 11-14 coordinates NAD(+); the sequence is SGNI. Residue C126 is the Acyl-thioester intermediate of the active site. Residues 157-165 and N276 each bind NAD(+); that span reads SAGPGTRAN.

It belongs to the acetaldehyde dehydrogenase family.

It carries out the reaction acetaldehyde + NAD(+) + CoA = acetyl-CoA + NADH + H(+). In Rhodococcus jostii (strain RHA1), this protein is Acetaldehyde dehydrogenase 3 (hsaG).